The primary structure comprises 175 residues: Lipopolysaccharide export system protein LptH (175 aa).

The N-terminal stretch at Met-1–Ala-24 is a signal peptide.

This sequence belongs to the LptA family. In terms of assembly, component of the lipopolysaccharide transport and assembly complex. Mainly exists as a dimer in solution. Tends to oligomerize already in solution. The protomers follow one another in a head-to-tail fashion throughout the crystal lattice, yielding a continuous fiber arrangement.

Its subcellular location is the periplasm. Functionally, involved in the assembly of lipopolysaccharide (LPS). Required for the translocation of LPS from the inner membrane to the outer membrane. May form a bridge between the inner membrane and the outer membrane, via interactions with LptC and LptD, thereby facilitating LPS transfer across the periplasm. Binds LPS. Important for cell envelope stability and essential for growth, cell viability and ability to cause infection in different animal models. This Pseudomonas aeruginosa (strain ATCC 15692 / DSM 22644 / CIP 104116 / JCM 14847 / LMG 12228 / 1C / PRS 101 / PAO1) protein is Lipopolysaccharide export system protein LptH.